We begin with the raw amino-acid sequence, 706 residues long: Glycylpeptide N-tetradecanoyltransferase (706 aa).

The interval 1-119 is disordered; the sequence is MSGIAGTSQD…LASGSSREGK (119 aa). A compositionally biased stretch (low complexity) spans 7 to 42; it reads TSQDTSVAASASSSSTRPAAASSSIAPPSPSLTTAP. Over residues 47–65 the composition is skewed to acidic residues; sequence EQDDDDDQENDDEEEEEEG. Positions 78–95 are enriched in basic residues; that stretch reads KQRKKKKSKAAAKLRKKL. Residues 180-183, 317-319, and 325-329 each bind tetradecanoyl-CoA; these read HKFW, LCV, and SKRLA. The Proton acceptor; via carboxylate role is filled by Val-706.

This sequence belongs to the NMT family. As to quaternary structure, monomer.

It localises to the cytoplasm. It carries out the reaction N-terminal glycyl-[protein] + tetradecanoyl-CoA = N-tetradecanoylglycyl-[protein] + CoA + H(+). Adds a myristoyl group to the N-terminal glycine residue of certain cellular proteins. This Mycosarcoma maydis (Corn smut fungus) protein is Glycylpeptide N-tetradecanoyltransferase (NMT1).